The primary structure comprises 642 residues: Chaperone protein HtpG (642 aa).

Positions 1-349 (MSAATETEVR…SADLPLNVSR (349 aa)) are a; substrate-binding. Residues 216–238 (ELPPAPPAKEGEEPEPPKTPEWE) are disordered. Over residues 224–236 (KEGEEPEPPKTPE) the composition is skewed to basic and acidic residues. Residues 350–570 (EILQQNRQVE…AHDMSATLER (221 aa)) are b. A c region spans residues 571 to 642 (LLKEAGQEVP…VKRLNKLLMG (72 aa)).

The protein belongs to the heat shock protein 90 family. In terms of assembly, homodimer.

It localises to the cytoplasm. In terms of biological role, molecular chaperone. Has ATPase activity. The protein is Chaperone protein HtpG of Magnetococcus marinus (strain ATCC BAA-1437 / JCM 17883 / MC-1).